Reading from the N-terminus, the 178-residue chain is Large ribosomal subunit protein uL6 (178 aa).

This sequence belongs to the universal ribosomal protein uL6 family. As to quaternary structure, part of the 50S ribosomal subunit.

In terms of biological role, this protein binds to the 23S rRNA, and is important in its secondary structure. It is located near the subunit interface in the base of the L7/L12 stalk, and near the tRNA binding site of the peptidyltransferase center. This Buchnera aphidicola subsp. Acyrthosiphon pisum (strain APS) (Acyrthosiphon pisum symbiotic bacterium) protein is Large ribosomal subunit protein uL6.